A 94-amino-acid polypeptide reads, in one-letter code: Small ribosomal subunit protein bS18c (94 aa).

The protein belongs to the bacterial ribosomal protein bS18 family. As to quaternary structure, part of the 30S ribosomal subunit.

It localises to the plastid. It is found in the chloroplast. This is Small ribosomal subunit protein bS18c from Manihot esculenta (Cassava).